Consider the following 334-residue polypeptide: rRNA 2'-O-methyltransferase fibrillarin (334 aa).

The segment covering 1 to 93 (MEGRGGSRGG…GGKPAAGGKP (93 aa)) has biased composition (gly residues). A disordered region spans residues 1–94 (MEGRGGSRGG…GKPAAGGKPG (94 aa)). S-adenosyl-L-methionine-binding positions include 184-185 (TT), 203-204 (EL), 228-229 (DA), and 248-251 (DVAQ).

Belongs to the methyltransferase superfamily. Fibrillarin family. In terms of assembly, component of box C/D small nucleolar ribonucleoprotein (snoRNP) particles. It is associated with the U3, U8 and U13 small nuclear RNAs. Part of the small subunit (SSU) processome, composed of more than 70 proteins and the RNA chaperone small nucleolar RNA (snoRNA) U3. In terms of processing, by homology to other fibrillarins, some or all of the N-terminal domain arginines are modified to asymmetric dimethylarginine (DMA).

The protein localises to the nucleus. It is found in the nucleolus. It catalyses the reaction L-glutaminyl-[histone H2A] + S-adenosyl-L-methionine = N(5)-methyl-L-glutaminyl-[histone H2A] + S-adenosyl-L-homocysteine + H(+). In terms of biological role, S-adenosyl-L-methionine-dependent methyltransferase that has the ability to methylate both RNAs and proteins. Involved in pre-rRNA processing. Utilizes the methyl donor S-adenosyl-L-methionine to catalyze the site-specific 2'-hydroxyl methylation of ribose moieties in pre-ribosomal RNA. Site specificity is provided by a guide RNA that base pairs with the substrate. Methylation occurs at a characteristic distance from the sequence involved in base pairing with the guide RNA. Also acts as a protein methyltransferase by mediating methylation of 'Gln-105' of histone H2A (H2AQ105me), a modification that impairs binding of the FACT complex and is specifically present at 35S ribosomal DNA locus. Part of the small subunit (SSU) processome, first precursor of the small eukaryotic ribosomal subunit. During the assembly of the SSU processome in the nucleolus, many ribosome biogenesis factors, an RNA chaperone and ribosomal proteins associate with the nascent pre-rRNA and work in concert to generate RNA folding, modifications, rearrangements and cleavage as well as targeted degradation of pre-ribosomal RNA by the RNA exosome. This chain is rRNA 2'-O-methyltransferase fibrillarin (fbl), found in Dictyostelium discoideum (Social amoeba).